We begin with the raw amino-acid sequence, 287 residues long: DDRGK domain-containing protein 1 (287 aa).

Topologically, residues 1–5 are lumenal; it reads MDLIL. Residues 6–26 form a helical membrane-spanning segment; the sequence is LLGIAVALLVILVTLFFFTKG. Residues 27 to 287 lie on the Cytoplasmic side of the membrane; it reads KGSQESGKYN…LINLVPVSAE (261 aa). 2 disordered regions span residues 28–102 and 135–164; these read GSQE…KRAK and KVEAEKEAEEERKREEAEKKAREEKARQEH. Low complexity predominate over residues 44-68; that stretch reads AQAAPRRAQVVRNQRNRARVAAAPA. The span at 85-102 shows a compositional bias: basic and acidic residues; sequence IPHADFNGEKMGAKKRAK.

This sequence belongs to the DDRGK1 family. In terms of assembly, interacts with Atg9; the interaction is transient.

The protein localises to the endoplasmic reticulum membrane. Its function is as follows. Substrate adapter for ufmylation, the covalent attachment of the ubiquitin-like modifier UFM1 to substrate proteins. Required for ufmylation of Atg9; protects the nervous system during aging, possibly by stabilizing Atg9 and supporting its function. The protein is DDRGK domain-containing protein 1 of Culex quinquefasciatus (Southern house mosquito).